Here is a 98-residue protein sequence, read N- to C-terminus: Integration host factor subunit alpha (98 aa).

Residues 51–71 (NFDLRDKNERPGRNPKTGEDI) are disordered. A compositionally biased stretch (basic and acidic residues) spans 53–69 (DLRDKNERPGRNPKTGE).

This sequence belongs to the bacterial histone-like protein family. As to quaternary structure, heterodimer of an alpha and a beta chain.

This protein is one of the two subunits of integration host factor, a specific DNA-binding protein that functions in genetic recombination as well as in transcriptional and translational control. This Vibrio cholerae serotype O1 (strain ATCC 39541 / Classical Ogawa 395 / O395) protein is Integration host factor subunit alpha.